Reading from the N-terminus, the 239-residue chain is tRNA (guanine-N(7)-)-methyltransferase (239 aa).

Residues glutamate 69, glutamate 94, aspartate 121, and aspartate 144 each contribute to the S-adenosyl-L-methionine site. Residue aspartate 144 is part of the active site. Substrate-binding positions include lysine 148, aspartate 180, and 217-220 (TKFE).

This sequence belongs to the class I-like SAM-binding methyltransferase superfamily. TrmB family.

It carries out the reaction guanosine(46) in tRNA + S-adenosyl-L-methionine = N(7)-methylguanosine(46) in tRNA + S-adenosyl-L-homocysteine. The protein operates within tRNA modification; N(7)-methylguanine-tRNA biosynthesis. Its function is as follows. Catalyzes the formation of N(7)-methylguanine at position 46 (m7G46) in tRNA. This Alcanivorax borkumensis (strain ATCC 700651 / DSM 11573 / NCIMB 13689 / SK2) protein is tRNA (guanine-N(7)-)-methyltransferase.